Reading from the N-terminus, the 368-residue chain is Quinolinate synthase (368 aa).

2 residues coordinate iminosuccinate: His46 and Ser63. Cys110 contacts [4Fe-4S] cluster. Residues 141-143 (YVN) and Ser162 each bind iminosuccinate. Cys230 lines the [4Fe-4S] cluster pocket. Iminosuccinate-binding positions include 256 to 258 (HPE) and Thr273. Cys320 is a [4Fe-4S] cluster binding site.

Belongs to the quinolinate synthase family. Type 3 subfamily. [4Fe-4S] cluster is required as a cofactor.

The protein localises to the cytoplasm. It carries out the reaction iminosuccinate + dihydroxyacetone phosphate = quinolinate + phosphate + 2 H2O + H(+). The protein operates within cofactor biosynthesis; NAD(+) biosynthesis; quinolinate from iminoaspartate: step 1/1. Catalyzes the condensation of iminoaspartate with dihydroxyacetone phosphate to form quinolinate. The sequence is that of Quinolinate synthase from Bacillus mycoides (strain KBAB4) (Bacillus weihenstephanensis).